The sequence spans 847 residues: uncharacterized protein (847 aa).

This is an uncharacterized protein from Penicillium chrysogenum virus (isolate Caston/2003) (PcV).